The chain runs to 553 residues: Membrane protein insertase YidC (553 aa).

A helical transmembrane segment spans residues 6 to 26 (LIALVLSLLVLVFWEMYFGLF). The disordered stretch occupies residues 34–59 (NKTEQAAPTTTQPATPQTVPPQAATP). Residues 38-59 (QAAPTTTQPATPQTVPPQAATP) show a composition bias toward low complexity. The next 5 helical transmembrane spans lie at 331 to 351 (LASAVDYGWFTFIAKPLVYVL), 360 to 380 (NWGVAIILLTIVIKILFWPLT), 424 to 444 (VNPMGGCLPMLLQIPVFFALY), 477 to 497 (IPYLGGLPVLTLLMGITMFIQ), and 512 to 532 (IMMIMPVMFTVFFVNFPSGLV).

Belongs to the OXA1/ALB3/YidC family. Type 1 subfamily. Interacts with the Sec translocase complex via SecD. Specifically interacts with transmembrane segments of nascent integral membrane proteins during membrane integration.

It is found in the cell inner membrane. Functionally, required for the insertion and/or proper folding and/or complex formation of integral membrane proteins into the membrane. Involved in integration of membrane proteins that insert both dependently and independently of the Sec translocase complex, as well as at least some lipoproteins. Aids folding of multispanning membrane proteins. This is Membrane protein insertase YidC from Syntrophobacter fumaroxidans (strain DSM 10017 / MPOB).